The primary structure comprises 278 residues: Digeranylgeranylglyceryl phosphate synthase (278 aa).

Helical transmembrane passes span 15 to 35, 36 to 56, 89 to 109, 133 to 153, 159 to 179, 203 to 223, 225 to 245, and 258 to 278; these read VIGS…WKIV, PIKL…GYII, IVLF…AFII, LIVA…FFEG, TLIP…VKGI, WFIS…PYFF, FNII…LVVL, and AYMK…TLPI.

This sequence belongs to the UbiA prenyltransferase family. DGGGP synthase subfamily. Requires Mg(2+) as cofactor.

It is found in the cell membrane. The catalysed reaction is sn-3-O-(geranylgeranyl)glycerol 1-phosphate + (2E,6E,10E)-geranylgeranyl diphosphate = 2,3-bis-O-(geranylgeranyl)-sn-glycerol 1-phosphate + diphosphate. It functions in the pathway membrane lipid metabolism; glycerophospholipid metabolism. Prenyltransferase that catalyzes the transfer of the geranylgeranyl moiety of geranylgeranyl diphosphate (GGPP) to the C2 hydroxyl of (S)-3-O-geranylgeranylglyceryl phosphate (GGGP). This reaction is the second ether-bond-formation step in the biosynthesis of archaeal membrane lipids. The polypeptide is Digeranylgeranylglyceryl phosphate synthase (Sulfurisphaera tokodaii (strain DSM 16993 / JCM 10545 / NBRC 100140 / 7) (Sulfolobus tokodaii)).